We begin with the raw amino-acid sequence, 950 residues long: Glycine dehydrogenase (decarboxylating) (950 aa).

K699 is modified (N6-(pyridoxal phosphate)lysine).

This sequence belongs to the GcvP family. The glycine cleavage system is composed of four proteins: P, T, L and H. Pyridoxal 5'-phosphate serves as cofactor.

The catalysed reaction is N(6)-[(R)-lipoyl]-L-lysyl-[glycine-cleavage complex H protein] + glycine + H(+) = N(6)-[(R)-S(8)-aminomethyldihydrolipoyl]-L-lysyl-[glycine-cleavage complex H protein] + CO2. In terms of biological role, the glycine cleavage system catalyzes the degradation of glycine. The P protein binds the alpha-amino group of glycine through its pyridoxal phosphate cofactor; CO(2) is released and the remaining methylamine moiety is then transferred to the lipoamide cofactor of the H protein. The sequence is that of Glycine dehydrogenase (decarboxylating) from Chromobacterium violaceum (strain ATCC 12472 / DSM 30191 / JCM 1249 / CCUG 213 / NBRC 12614 / NCIMB 9131 / NCTC 9757 / MK).